A 58-amino-acid polypeptide reads, in one-letter code: Large ribosomal subunit protein uL30 (58 aa).

The protein belongs to the universal ribosomal protein uL30 family. As to quaternary structure, part of the 50S ribosomal subunit.

This Erythrobacter litoralis (strain HTCC2594) protein is Large ribosomal subunit protein uL30.